Here is a 516-residue protein sequence, read N- to C-terminus: uncharacterized protein (516 aa).

9 helical membrane-spanning segments follow: residues 183–203 (SAAD…GDGV), 261–281 (VLKT…TYII), 308–328 (VMNG…TALL), 329–349 (LDHQ…AYSF), 356–376 (LLDV…GQVL), 379–399 (LAFS…LALA), 430–450 (LGHG…FLAL), 461–481 (PAWL…IWLL), and 492–512 (IVFA…ASAF).

It localises to the cell membrane. Its function is as follows. Possible permease/transporter. This is an uncharacterized protein from Sinorhizobium fredii (strain NBRC 101917 / NGR234).